The chain runs to 97 residues: uncharacterized protein (97 aa).

This is an uncharacterized protein from Salmonella typhi.